The sequence spans 102 residues: UPF0235 protein Noc_3000 (102 aa).

It belongs to the UPF0235 family.

The sequence is that of UPF0235 protein Noc_3000 from Nitrosococcus oceani (strain ATCC 19707 / BCRC 17464 / JCM 30415 / NCIMB 11848 / C-107).